The primary structure comprises 281 residues: Nucleotide-binding protein TRQ2_1124 (281 aa).

9-16 is an ATP binding site; the sequence is GLSGAGKT. 58–61 is a binding site for GTP; it reads DVRS.

The protein belongs to the RapZ-like family.

Displays ATPase and GTPase activities. The chain is Nucleotide-binding protein TRQ2_1124 from Thermotoga sp. (strain RQ2).